The primary structure comprises 469 residues: MFSLLLLLLLLCNTGSHGFPAATSETQEQDVEIVQKYLKNYYNLNSDGVPVEKKRNSGLVVEKLKQMQQFFGLKVTGKPDAETLNVMKQPRCGVPDVAEFVLTPGNPRWENTHLTYRIENYTPDLSREDVDRAIEKAFQLWSNVSPLTFTKVSEGQADIMISFVRGDHRDNSPFDGPGGNLAHAFQPGPGIGGDAHFDEDERWTKNFRDYNLYRVAAHELGHSLGLSHSTDIGALMYPNYIYTGDVQLSQDDIDGIQAIYGPSENPVQPSGPQTPQVCDSKLTFDAITTLRGELMFFKDRFYMRTNSFYPEVELNFISVFWPQVPNGLQAAYEIADRDEVRFFKGNKYWAVRGQDVLYGYPKDIHRSFGFPSTVKNIDAAVFEEDTGKTYFFVAHECWRYDEYKQSMDTGYPKMIAEEFPGIGNKVDAVFQKDGFLYFFHGTRQYQFDFKTKRILTLQKANSWFNCRKN.

Positions 1–19 are cleaved as a signal peptide; the sequence is MFSLLLLLLLLCNTGSHGF. Residues 20–99 constitute a propeptide, activation peptide; it reads PAATSETQEQ…PRCGVPDVAE (80 aa). Phosphoserine is present on Ser57. Positions 90 to 97 match the Cysteine switch motif; the sequence is PRCGVPDV. Residue Cys92 participates in Zn(2+) binding. A glycan (N-linked (GlcNAc...) asparagine) is linked at Asn120. Ca(2+)-binding residues include Asp124 and Asp158. Residues His168 and Asp170 each contribute to the Zn(2+) site. Positions 175, 176, 178, and 180 each coordinate Ca(2+). His183 provides a ligand contact to Zn(2+). Residues Gly190, Gly192, and Asp194 each contribute to the Ca(2+) site. Position 196 (His196) interacts with Zn(2+). 3 residues coordinate Ca(2+): Asp198, Glu199, and Glu201. Residue His218 participates in Zn(2+) binding. Glu219 is an active-site residue. 2 residues coordinate Zn(2+): His222 and His228. A Phosphothreonine modification is found at Thr274. Hemopexin repeat units follow at residues 275–324, 325–371, 374–422, and 423–466; these read PQVC…WPQV, PNGL…FGFP, VKNI…FPGI, and GNKV…WFNC. Cys278 and Cys466 are joined by a disulfide. Ca(2+) is bound by residues Asp285 and Gln329. Tyr360 carries the phosphotyrosine; by PKDCC modification. Ca(2+)-binding residues include Asp378 and Asp427.

Belongs to the peptidase M10A family. Ca(2+) serves as cofactor. The cofactor is Zn(2+). In terms of processing, undergoes autolytic cleavage to produce a N-terminal fragment having reduced collagenolytic activity. Post-translationally, tyrosine phosphorylated in platelets by PKDCC/VLK.

It is found in the secreted. It localises to the extracellular space. The protein resides in the extracellular matrix. The enzyme catalyses Cleavage of the triple helix of collagen at about three-quarters of the length of the molecule from the N-terminus, at 775-Gly-|-Ile-776 in the alpha1(I) chain. Cleaves synthetic substrates and alpha-macroglobulins at bonds where P1' is a hydrophobic residue.. Its activity is regulated as follows. Can be activated without removal of the activation peptide. Functionally, cleaves collagens of types I, II, and III at one site in the helical domain. Also cleaves collagens of types VII and X. This Sus scrofa (Pig) protein is Interstitial collagenase (MMP1).